Reading from the N-terminus, the 93-residue chain is Acylphosphatase (93 aa).

Positions 5-93 constitute an Acylphosphatase-like domain; that stretch reads TAILRVTGFV…EERKTFDIVY (89 aa). Active-site residues include Arg-20 and Asn-38.

The protein belongs to the acylphosphatase family.

It carries out the reaction an acyl phosphate + H2O = a carboxylate + phosphate + H(+). The protein is Acylphosphatase (acyP) of Listeria monocytogenes serotype 4b (strain F2365).